A 490-amino-acid chain; its full sequence is MSRYGLQKLYINGAYTDSASGDTFDAVNPANGECIAQLQAANAQDVDKAVAAAKQGQPVWAAMTAMERSRILRRAVDILRDRNDELAAIETADTGKPLSETRSVDIVTGADVLEYYAGLIPALEGQQIPLRGSAFVYTRREPLGVVAGIGAWNYPIQIALWKSAPALAAGNAMIFKPSEVTSLTALKLAEIYTEAGLPAGVFNVLTGSGDQVGQMLTEHPGIAKVSFTGGIASGKKVMANAAGSTLKDVTMELGGKSPLIIFADADLDKAADIAMMANFYSSGQVCTNGTRVFVPQALQAAFEQKIVERVKRIHIGDPSDERTNFGPLVSFQHRDSVMRYIDSGKREGATLLIGGYSLTEDALAHGAYVAPTVFTHCRDDMQIVREEIFGPVMSILSYQSEEEVIRRANDTEYGLAAGVVTQDLNRAHRVIHQLQAGICWINTWGESAPEMPVGGYKHSGVGRENGISTLEHYTQIKSIQVELGSFNSVF.

A K(+)-binding site is contributed by aspartate 93. Residue 150 to 152 coordinates NAD(+); it reads GAW. Lysine 162 (charge relay system) is an active-site residue. Residue 176-179 participates in NAD(+) binding; sequence KPSE. Residue valine 180 participates in K(+) binding. Position 230–233 (230–233) interacts with NAD(+); sequence GIAS. A K(+)-binding site is contributed by leucine 246. Glutamate 252 serves as the catalytic Proton acceptor. Residues glycine 254, cysteine 286, and glutamate 387 each contribute to the NAD(+) site. The active-site Nucleophile is the cysteine 286. At cysteine 286 the chain carries Cysteine sulfenic acid (-SOH). Residues lysine 457 and glycine 460 each contribute to the K(+) site. The active-site Charge relay system is the glutamate 464.

This sequence belongs to the aldehyde dehydrogenase family. In terms of assembly, dimer of dimers. It depends on K(+) as a cofactor.

It carries out the reaction betaine aldehyde + NAD(+) + H2O = glycine betaine + NADH + 2 H(+). Its pathway is amine and polyamine biosynthesis; betaine biosynthesis via choline pathway; betaine from betaine aldehyde: step 1/1. In terms of biological role, involved in the biosynthesis of the osmoprotectant glycine betaine. Catalyzes the irreversible oxidation of betaine aldehyde to the corresponding acid. In Yersinia pseudotuberculosis serotype O:1b (strain IP 31758), this protein is Betaine aldehyde dehydrogenase.